The primary structure comprises 144 residues: Large ribosomal subunit protein uL16 (144 aa).

The protein belongs to the universal ribosomal protein uL16 family. Part of the 50S ribosomal subunit.

Its function is as follows. Binds 23S rRNA and is also seen to make contacts with the A and possibly P site tRNAs. This Acidobacterium capsulatum (strain ATCC 51196 / DSM 11244 / BCRC 80197 / JCM 7670 / NBRC 15755 / NCIMB 13165 / 161) protein is Large ribosomal subunit protein uL16.